The following is a 552-amino-acid chain: ATP synthase subunit alpha (552 aa).

ATP is bound at residue 173–180 (GDRQTGKT). Positions 526-552 (ASPLDPSAVRKESIPVHRAPARTDDEG) are disordered. A compositionally biased stretch (basic and acidic residues) spans 533–552 (AVRKESIPVHRAPARTDDEG).

The protein belongs to the ATPase alpha/beta chains family. As to quaternary structure, F-type ATPases have 2 components, CF(1) - the catalytic core - and CF(0) - the membrane proton channel. CF(1) has five subunits: alpha(3), beta(3), gamma(1), delta(1), epsilon(1). CF(0) has three main subunits: a(1), b(2) and c(9-12). The alpha and beta chains form an alternating ring which encloses part of the gamma chain. CF(1) is attached to CF(0) by a central stalk formed by the gamma and epsilon chains, while a peripheral stalk is formed by the delta and b chains.

It is found in the cell membrane. The catalysed reaction is ATP + H2O + 4 H(+)(in) = ADP + phosphate + 5 H(+)(out). Produces ATP from ADP in the presence of a proton gradient across the membrane. The alpha chain is a regulatory subunit. The chain is ATP synthase subunit alpha from Frankia alni (strain DSM 45986 / CECT 9034 / ACN14a).